We begin with the raw amino-acid sequence, 469 residues long: DNA-binding transcriptional regulator NtrC (469 aa).

The Response regulatory domain maps to 5-119 (IVWVVDDDSS…EAVALVERAI (115 aa)). Asp-54 bears the 4-aspartylphosphate mark. The Sigma-54 factor interaction domain occupies 140–369 (MIGEAPAMQD…LENTCRWLTV (230 aa)). ATP-binding positions include 168–175 (GESGTGKE) and 231–240 (ADGGTLFLDE). A DNA-binding region (H-T-H motif) is located at residues 445–464 (KQEAARLLGWGRNTLTRKLK).

In terms of processing, phosphorylated and dephosphorylated by NtrB.

It is found in the cytoplasm. Its function is as follows. Member of the two-component regulatory system NtrB/NtrC, which controls expression of the nitrogen-regulated (ntr) genes in response to nitrogen limitation. Phosphorylated NtrC binds directly to DNA and stimulates the formation of open promoter-sigma54-RNA polymerase complexes. The protein is DNA-binding transcriptional regulator NtrC (glnG) of Salmonella typhimurium (strain LT2 / SGSC1412 / ATCC 700720).